A 220-amino-acid polypeptide reads, in one-letter code: N-(5'-phosphoribosyl)anthranilate isomerase (220 aa).

The protein belongs to the TrpF family.

It carries out the reaction N-(5-phospho-beta-D-ribosyl)anthranilate = 1-(2-carboxyphenylamino)-1-deoxy-D-ribulose 5-phosphate. Its pathway is amino-acid biosynthesis; L-tryptophan biosynthesis; L-tryptophan from chorismate: step 3/5. This is N-(5'-phosphoribosyl)anthranilate isomerase from Leptothrix cholodnii (strain ATCC 51168 / LMG 8142 / SP-6) (Leptothrix discophora (strain SP-6)).